Here is a 246-residue protein sequence, read N- to C-terminus: tRNA (guanine-N(1)-)-methyltransferase (246 aa).

S-adenosyl-L-methionine is bound by residues Gly113 and 133-138 (IGDYVL).

Belongs to the RNA methyltransferase TrmD family. As to quaternary structure, homodimer.

Its subcellular location is the cytoplasm. It carries out the reaction guanosine(37) in tRNA + S-adenosyl-L-methionine = N(1)-methylguanosine(37) in tRNA + S-adenosyl-L-homocysteine + H(+). Its function is as follows. Specifically methylates guanosine-37 in various tRNAs. This chain is tRNA (guanine-N(1)-)-methyltransferase, found in Yersinia enterocolitica serotype O:8 / biotype 1B (strain NCTC 13174 / 8081).